Consider the following 377-residue polypeptide: MGAGGRMSDPSEGKNILERVPVDPPFTLSDLKKAIPTHCFERSVIRSSYYVVHDLIVAYVFYYLANTYIPLIPTPLAYLAWPVYWFCQASILTGLWVIGHECGHHAFSDYQLIDDIVGFVLHSALLTPYFSWKYSHRNHHANTNSLDNDEVYIPKRKSKVKIYSKLLNNPPGRVFTLVFRLTLGFPLYLLTNISGKKYGRFANHFDPMSPIFNDRERVQVLLSDFGLLAVFYAIKLLVAAKGAAWVINMYAIPVLGVSVFFVLITYLHHTHLSLPHYDSTEWNWIKGALSTIDRDFGFLNRVFHDVTHTHVLHHLISYIPHYHAKEARDAIKPVLGEYYKIDRTPIFKAMYREAKECIYIEPDEDSEHKGVFWYHKM.

A run of 2 helical transmembrane segments spans residues 55–75 (LIVA…IPTP) and 79–99 (LAWP…WVIG). The Histidine box-1 motif lies at 100–104 (HECGH). The chain crosses the membrane as a helical span at residues 112-132 (LIDDIVGFVLHSALLTPYFSW). The Histidine box-2 signature appears at 136 to 140 (HRNHH). A run of 3 helical transmembrane segments spans residues 174–194 (VFTL…TNIS), 220–240 (VLLS…LVAA), and 244–264 (AWVI…FVLI). The Histidine box-3 signature appears at 310–314 (HVLHH).

It belongs to the fatty acid desaturase type 1 family.

Its subcellular location is the membrane. Its pathway is lipid metabolism; polyunsaturated fatty acid biosynthesis. In terms of biological role, converts linoleic acid into a conjugated octadecatrienoic acid, probably calendic acid. This is Delta(12) fatty acid desaturase DES8.11 from Calendula officinalis (Pot marigold).